Consider the following 307-residue polypeptide: Estrogen receptor (307 aa).

The nuclear receptor DNA-binding region spans 1–43; the sequence is GHNDYMCPATNQCTIDKNRRKSCQACRLRKCYEVGMMKGGIRK. An NR C4-type zinc finger spans residues 7–31; sequence CPATNQCTIDKNRRKSCQACRLRKC. A hinge region spans residues 44-95; the sequence is DRRGGRILKHKRQREEHDNRNAGAIVERRSPNLWPSPLMITHNKKNSPALSL. The NR LBD domain occupies 96 to 307; it reads TADQIVSALL…HFRHMSNKGM (212 aa).

It belongs to the nuclear hormone receptor family. NR3 subfamily. As to quaternary structure, binds DNA as a homodimer. Can form a heterodimer with ER-beta.

The protein resides in the nucleus. Functionally, the steroid hormones and their receptors are involved in the regulation of eukaryotic gene expression and affect cellular proliferation and differentiation in target tissues. The chain is Estrogen receptor (ESR1) from Aspidoscelis uniparens (Desert grassland whiptail lizard).